The following is a 486-amino-acid chain: NADH-quinone oxidoreductase subunit N (486 aa).

The next 14 helical transmembrane spans lie at 8–28, 38–58, 73–93, 105–125, 128–148, 169–189, 196–216, 235–255, 269–289, 304–324, 325–345, 373–393, 405–427, and 454–474; these read FIAL…MLAV, ATLS…VLGV, ACFY…LAHA, LYLL…AQHL, LFIG…YAFF, FLLF…FAGL, HVLS…GLGF, PAPV…AVLL, LLNI…NLLA, IAHL…AVEA, VGVY…VITL, AVMT…GFIG, HLWW…YLRV, and IMLV…QPLL.

The protein belongs to the complex I subunit 2 family. As to quaternary structure, NDH-1 is composed of 13 different subunits. Subunits NuoA, H, J, K, L, M, N constitute the membrane sector of the complex.

Its subcellular location is the cell inner membrane. It catalyses the reaction a quinone + NADH + 5 H(+)(in) = a quinol + NAD(+) + 4 H(+)(out). In terms of biological role, NDH-1 shuttles electrons from NADH, via FMN and iron-sulfur (Fe-S) centers, to quinones in the respiratory chain. The immediate electron acceptor for the enzyme in this species is believed to be ubiquinone. Couples the redox reaction to proton translocation (for every two electrons transferred, four hydrogen ions are translocated across the cytoplasmic membrane), and thus conserves the redox energy in a proton gradient. In Pseudomonas aeruginosa (strain ATCC 15692 / DSM 22644 / CIP 104116 / JCM 14847 / LMG 12228 / 1C / PRS 101 / PAO1), this protein is NADH-quinone oxidoreductase subunit N.